Consider the following 617-residue polypeptide: Dihydroxy-acid dehydratase (617 aa).

Residue D82 coordinates Mg(2+). C123 lines the [2Fe-2S] cluster pocket. Residues D124 and K125 each coordinate Mg(2+). At K125 the chain carries N6-carboxylysine. C197 lines the [2Fe-2S] cluster pocket. Mg(2+) is bound at residue E497. S523 (proton acceptor) is an active-site residue.

Belongs to the IlvD/Edd family. In terms of assembly, homodimer. It depends on [2Fe-2S] cluster as a cofactor. The cofactor is Mg(2+).

It catalyses the reaction (2R)-2,3-dihydroxy-3-methylbutanoate = 3-methyl-2-oxobutanoate + H2O. It carries out the reaction (2R,3R)-2,3-dihydroxy-3-methylpentanoate = (S)-3-methyl-2-oxopentanoate + H2O. It functions in the pathway amino-acid biosynthesis; L-isoleucine biosynthesis; L-isoleucine from 2-oxobutanoate: step 3/4. It participates in amino-acid biosynthesis; L-valine biosynthesis; L-valine from pyruvate: step 3/4. Functionally, functions in the biosynthesis of branched-chain amino acids. Catalyzes the dehydration of (2R,3R)-2,3-dihydroxy-3-methylpentanoate (2,3-dihydroxy-3-methylvalerate) into 2-oxo-3-methylpentanoate (2-oxo-3-methylvalerate) and of (2R)-2,3-dihydroxy-3-methylbutanoate (2,3-dihydroxyisovalerate) into 2-oxo-3-methylbutanoate (2-oxoisovalerate), the penultimate precursor to L-isoleucine and L-valine, respectively. The chain is Dihydroxy-acid dehydratase from Streptomyces coelicolor (strain ATCC BAA-471 / A3(2) / M145).